A 136-amino-acid polypeptide reads, in one-letter code: Large ribosomal subunit protein bL21 (136 aa).

This sequence belongs to the bacterial ribosomal protein bL21 family. Part of the 50S ribosomal subunit. Contacts protein L20.

This protein binds to 23S rRNA in the presence of protein L20. The protein is Large ribosomal subunit protein bL21 of Gloeothece citriformis (strain PCC 7424) (Cyanothece sp. (strain PCC 7424)).